Here is a 149-residue protein sequence, read N- to C-terminus: Transcription antitermination protein NusB (149 aa).

The protein belongs to the NusB family.

Involved in transcription antitermination. Required for transcription of ribosomal RNA (rRNA) genes. Binds specifically to the boxA antiterminator sequence of the ribosomal RNA (rrn) operons. The sequence is that of Transcription antitermination protein NusB from Acinetobacter baumannii (strain AB307-0294).